The following is a 200-amino-acid chain: Recombination protein RecR (200 aa).

The segment at 59-74 (CGTCGSLDVTDPCAVC) adopts a C4-type zinc-finger fold. The Toprim domain occupies 82–177 (RLLCVVEEVG…PVTMLARGVP (96 aa)).

Belongs to the RecR family.

In terms of biological role, may play a role in DNA repair. It seems to be involved in an RecBC-independent recombinational process of DNA repair. It may act with RecF and RecO. This is Recombination protein RecR from Caulobacter vibrioides (strain ATCC 19089 / CIP 103742 / CB 15) (Caulobacter crescentus).